Reading from the N-terminus, the 302-residue chain is Probable lipid kinase YegS-like (302 aa).

One can recognise a DAGKc domain in the interval 1 to 129; the sequence is MDKDKVLLVL…IDLGAVNGKL (129 aa). Residues Thr-39, 65 to 71, and Thr-92 each bind ATP; that span reads GDGTLRE. Mg(2+) contacts are provided by Arg-210, Asp-213, and Leu-215. Residue Glu-268 is the Proton acceptor of the active site.

This sequence belongs to the diacylglycerol/lipid kinase family. YegS lipid kinase subfamily. Mg(2+) serves as cofactor. Ca(2+) is required as a cofactor.

It is found in the cytoplasm. Functionally, probably phosphorylates lipids; the in vivo substrate is unknown. The sequence is that of Probable lipid kinase YegS-like from Pseudomonas aeruginosa (strain UCBPP-PA14).